Reading from the N-terminus, the 826-residue chain is Glycerol-3-phosphate acyltransferase 1, mitochondrial (826 aa).

Residues 1 to 87 (MDESALTLGT…FFNPSIPSLG (87 aa)) are Cytoplasmic-facing. Positions 80–120 (NPSIPSLGLRNVIYINETHTRHRGWLARRLSYVLFIQERDV) are important for mitochondrial localization. The stretch at 88 to 118 (LRNVIYINETHTRHRGWLARRLSYVLFIQER) is an intramembrane region. The Cytoplasmic portion of the chain corresponds to 119–826 (DVHKGMFATN…LEYILSFVVL (708 aa)). The HXXXXD motif signature appears at 230-235 (HRSHID). Positions 278, 279, 288, 293, and 328 each coordinate CoA. Ser-380 is subject to Phosphoserine. Arg-462 lines the CoA pocket. Phosphoserine occurs at positions 686 and 693. Residues Lys-778 and Lys-782 each carry the N6-acetyllysine modification.

This sequence belongs to the GPAT/DAPAT family.

Its subcellular location is the mitochondrion outer membrane. The enzyme catalyses sn-glycerol 3-phosphate + an acyl-CoA = a 1-acyl-sn-glycero-3-phosphate + CoA. The catalysed reaction is (9Z,12Z)-octadecadienoyl-CoA + sn-glycerol 3-phosphate = 1-(9Z,12Z)-octadecadienoyl-sn-glycero-3-phosphate + CoA. It catalyses the reaction sn-glycerol 3-phosphate + (9Z)-octadecenoyl-CoA = 1-(9Z-octadecenoyl)-sn-glycero-3-phosphate + CoA. It carries out the reaction sn-glycerol 3-phosphate + octadecanoyl-CoA = 1-octadecanoyl-sn-glycero-3-phosphate + CoA. The enzyme catalyses sn-glycerol 3-phosphate + hexadecanoyl-CoA = 1-hexadecanoyl-sn-glycero-3-phosphate + CoA. The catalysed reaction is dodecanoyl-CoA + sn-glycerol 3-phosphate = 1-dodecanoyl-sn-glycerol 3-phosphate + CoA. It catalyses the reaction 1-acyl-sn-glycero-3-phospho-(1'-sn-glycerol) + an acyl-CoA = a 1,2-diacyl-sn-glycero-3-phospho-(1'-sn-glycerol) + CoA. Its pathway is phospholipid metabolism; CDP-diacylglycerol biosynthesis; CDP-diacylglycerol from sn-glycerol 3-phosphate: step 1/3. In terms of biological role, mitochondrial membrane protein that catalyzes the essential first step of biosynthesis of glycerolipids such as triglycerides, phosphatidic acids and lysophosphatidic acids. Esterifies acyl-group from acyl-coenzyme A (acyl-CoA) to the sn-1 position of glycerol-3-phosphate, to produce lysophosphatidic acid. Has a narrow hydrophobic binding cleft that selects for a linear acyl chain. Catalytic activity is higher for substrates with a 16-carbon acyl chain. This Sus scrofa (Pig) protein is Glycerol-3-phosphate acyltransferase 1, mitochondrial.